We begin with the raw amino-acid sequence, 617 residues long: MTGPEQEMVSSVAATTPAPIAPVVLPKTSESENLLKIRHSMSHVMAMAVQKLFPKAQVTIGPWTEAGFYYDFDNPEPFTEADLKAIKKEMGKIIGRKLPLERIEVSREEAERRIKAQNEPYKLEILERLVEPITLYTLGEQWWDLCAGPHVANTSELNPKAFELESVAGAYWRGDETKAQLQRIYGTAWETADQLSEHKRRKEEALRRDHRRLGKDLDLFSIEDEAGAGLVFWHPRGARMRLLIEDFWRQAHFEGGYELLYTPHVADISLWKTSGHLDFYAESMFGPMEVDERQYQLKPMNCPFHVLTYASKLRSYRELPIRWAELGTVYRYERPGVMHGLMRVRGFTQDDAHVFCLPEQISDEILRILNLTERILSTFDFSNYEINLSTKPDKAIGDDAVWELATKGLIEALKRKGWAYKIDEGGGAFYGPKIDLKIEDAIGRMWQCSTIQLDFNLPERFELDYIAADGSKQRPIMIHRAIFGSLERFFGIMTENYAGDFPFWLAPEQIRLLPVTDEVLGYAEEFQNQLKAAGIRASIDRSGDRLGKLIRIGEKMKIPVLAVIGAKEAEQGAASLRSRRDGDLGVITKERLIATAQSANQDRKASLSFDNSVSVEE.

Residues 209 to 502 (DHRRLGKDLD…MTENYAGDFP (294 aa)) are catalytic. The Zn(2+) site is built by C302, H353, and H479.

This sequence belongs to the class-II aminoacyl-tRNA synthetase family. Homodimer. Zn(2+) serves as cofactor.

The protein resides in the cytoplasm. It carries out the reaction tRNA(Thr) + L-threonine + ATP = L-threonyl-tRNA(Thr) + AMP + diphosphate + H(+). Its function is as follows. Catalyzes the attachment of threonine to tRNA(Thr) in a two-step reaction: L-threonine is first activated by ATP to form Thr-AMP and then transferred to the acceptor end of tRNA(Thr). Also edits incorrectly charged L-seryl-tRNA(Thr). The chain is Threonine--tRNA ligase from Synechococcus sp. (strain CC9311).